The chain runs to 817 residues: Coiled-coil domain-containing protein 175 (817 aa).

Coiled coils occupy residues 130–166 and 217–594; these read ILEI…ALGI and LQDA…KQEE. Positions 761–817 are disordered; that stretch reads EEESPSSLSKEDLQKAGMKQKEEKTLRFSPSLHTRRDTLSRNCKMIKKRSRSPKNKP. A compositionally biased stretch (basic and acidic residues) spans 769-786; it reads SKEDLQKAGMKQKEEKTL. The segment covering 804–817 has biased composition (basic residues); it reads KMIKKRSRSPKNKP.

This chain is Coiled-coil domain-containing protein 175 (Ccdc175), found in Rattus norvegicus (Rat).